The primary structure comprises 496 residues: Cytochrome P450 monooxygenase cle4 (496 aa).

The chain crosses the membrane as a helical span at residues 12-34 (FFTSPFPLTVGILSISLSGVLWY). Residue Cys-435 coordinates heme.

This sequence belongs to the cytochrome P450 family. Heme serves as cofactor.

Its subcellular location is the membrane. It participates in secondary metabolite biosynthesis; terpenoid biosynthesis. Functionally, cytochrome P450 monooxygenase; part of the cluster A that mediates the biosynthesis of chevalone E and its oxidized derivatives that possess a unique five-membered lactone ring and can synergistically enhance the cytotoxicity of doxorubicin (DOX) in breast cancer cells. Within the pathway, cle4 is involved in hydroxylation of the chavalone E scaffold at positions C-11 and C-12 and contributes with cle2 to the production of seven oxidation derivatives. The molecular scaffold is commonly biosynthesized by a series of enzymes including the non-reducing polyketide synthase (NR-PKS) cle1 that produces the alpha-pyrone triacetic acid lactone (TAL); The membrane-bound prenyltransferase cle5 that accepts TAL as its substrate to perform a C-3 geranylgeranylation reaction, in which the pathway-dedicated GGPS cle6 is required to provide GGPP, the other substrate of cle5; the FAD-dependent monooxygenase Cle3 that forms an (S)-epoxide ring at the terminal olefin of the geranylgeranyl group; and the terpene cyclase Cle7 that catalyzes the cyclization of the prenyl group that yields the pentacyclic pathway intermediate chevalone E. Chevalone E can derivatize into seven new oxidized analogs by the cytochrome P450 monooxygenases cle2 (acting at C-20) and cle4 (acting at C-11 and C-12). The chain is Cytochrome P450 monooxygenase cle4 from Aspergillus versicolor.